Reading from the N-terminus, the 82-residue chain is Probable glutamyl-tRNA(Gln) amidotransferase subunit C (82 aa).

Belongs to the GatC family. In terms of assembly, heterotrimer of A, B and C subunits.

It carries out the reaction L-glutamyl-tRNA(Gln) + L-glutamine + ATP + H2O = L-glutaminyl-tRNA(Gln) + L-glutamate + ADP + phosphate + H(+). The enzyme catalyses L-aspartyl-tRNA(Asn) + L-glutamine + ATP + H2O = L-asparaginyl-tRNA(Asn) + L-glutamate + ADP + phosphate + 2 H(+). In terms of biological role, allows the formation of correctly charged Asn-tRNA(Asn) or Gln-tRNA(Gln) through the transamidation of misacylated Asp-tRNA(Asn) or Glu-tRNA(Gln) in organisms which lack either or both of asparaginyl-tRNA or glutaminyl-tRNA synthetases. The reaction takes place in the presence of glutamine and ATP through an activated phospho-Asp-tRNA(Asn) or phospho-Glu-tRNA(Gln). This Methanocaldococcus jannaschii (strain ATCC 43067 / DSM 2661 / JAL-1 / JCM 10045 / NBRC 100440) (Methanococcus jannaschii) protein is Probable glutamyl-tRNA(Gln) amidotransferase subunit C.